The following is a 305-amino-acid chain: MSAPQKTSALRTPFKTVALVGRYSTAGIEGPLEELASYILRNGQDVVFERETSLATGLTGYPALTAEEIGREADVAVVLGGDGTLLGIARQLAGHNVPLIGVNHGRLGFMTDIPLEDVQSVLPDMLGGRYEAETRLLLESSVVRDDSPIFSALALNDVVVNRSGISGMVELAVSVDGYFMYNQRSDGLIVSTATGSTAYALSAGGPILHPTLSGLVLVPIAPHSLSNRPIVLPQEAEVTIEVATARDASVNFDMQSLTSLLPGDRIVVRRSKKTIQLLHPVGYNYYATLRKKLHWHEYPTEDNRL.

The active-site Proton acceptor is Asp-82. NAD(+) contacts are provided by residues 82 to 83, 156 to 157, Arg-184, Asp-186, 197 to 202, Ala-221, and Gln-255; these read DG, ND, and TAYALS.

This sequence belongs to the NAD kinase family. A divalent metal cation is required as a cofactor.

The protein localises to the cytoplasm. The enzyme catalyses NAD(+) + ATP = ADP + NADP(+) + H(+). Its function is as follows. Involved in the regulation of the intracellular balance of NAD and NADP, and is a key enzyme in the biosynthesis of NADP. Catalyzes specifically the phosphorylation on 2'-hydroxyl of the adenosine moiety of NAD to yield NADP. In Cupriavidus pinatubonensis (strain JMP 134 / LMG 1197) (Cupriavidus necator (strain JMP 134)), this protein is NAD kinase.